The primary structure comprises 890 residues: Alanine--tRNA ligase (890 aa).

Zn(2+) is bound by residues His568, His572, Cys680, and His684.

The protein belongs to the class-II aminoacyl-tRNA synthetase family. Zn(2+) serves as cofactor.

It is found in the cytoplasm. It carries out the reaction tRNA(Ala) + L-alanine + ATP = L-alanyl-tRNA(Ala) + AMP + diphosphate. Its function is as follows. Catalyzes the attachment of alanine to tRNA(Ala) in a two-step reaction: alanine is first activated by ATP to form Ala-AMP and then transferred to the acceptor end of tRNA(Ala). Also edits incorrectly charged Ser-tRNA(Ala) and Gly-tRNA(Ala) via its editing domain. This is Alanine--tRNA ligase from Psychrobacter cryohalolentis (strain ATCC BAA-1226 / DSM 17306 / VKM B-2378 / K5).